A 318-amino-acid polypeptide reads, in one-letter code: 1-aminocyclopropane-1-carboxylate oxidase (318 aa).

One can recognise a Fe2OG dioxygenase domain in the interval 151–251 (PTFGTKVSNY…RMSIASFYNP (101 aa)). Fe cation-binding residues include histidine 175, aspartate 177, and histidine 232.

The protein belongs to the iron/ascorbate-dependent oxidoreductase family. Requires Fe cation as cofactor.

It carries out the reaction 1-aminocyclopropane-1-carboxylate + L-ascorbate + O2 = ethene + L-dehydroascorbate + hydrogen cyanide + CO2 + 2 H2O. It functions in the pathway alkene biosynthesis; ethylene biosynthesis via S-adenosyl-L-methionine; ethylene from S-adenosyl-L-methionine: step 2/2. This chain is 1-aminocyclopropane-1-carboxylate oxidase (ACO), found in Dendrobium crumenatum (Tropical pigeon orchid).